The primary structure comprises 975 residues: 26S proteasome non-ATPase regulatory subunit 1 (975 aa).

Positions 272–303 (EKKSTTTTTTTPASDSMEIDIDSGNEKSGGSS) are disordered. PC repeat units follow at residues 393 to 426 (SAIS…NQTP), 431 to 464 (GSLY…ILHH), 465 to 499 (GASL…VSGE), 500 to 534 (AAGL…EKTI), 536 to 569 (SLSM…LIRY), 570 to 605 (GGMY…SVRR), 606 to 638 (AAVT…PHVR), 640 to 674 (GAAF…YVKQ), 675 to 715 (AAWI…DSMS), and 718 to 748 (GAVL…NMNA). Disordered stretches follow at residues 832–882 (SSRS…KSNP) and 922–975 (PEQL…EFTE). Basic and acidic residues-rich tracts occupy residues 842-880 (DVEK…ERKS) and 926-935 (VVKEKPETKQ). Over residues 944-961 (TATATASLPNATTTTSPT) the composition is skewed to low complexity.

Belongs to the proteasome subunit S1 family.

Acts as a regulatory subunit of the 26 proteasome which is involved in the ATP-dependent degradation of ubiquitinated proteins. The sequence is that of 26S proteasome non-ATPase regulatory subunit 1 (psmD1) from Dictyostelium discoideum (Social amoeba).